Here is a 495-residue protein sequence, read N- to C-terminus: Autoinducer 2 import ATP-binding protein LsrA (495 aa).

2 ABC transporter domains span residues 5–233 (IEAH…TPVS) and 256–494 (AQDF…FGGQ). ATP is bound at residue 37–44 (GGNGAGKS).

The protein belongs to the ABC transporter superfamily. AI-2 autoinducer porter (TC 3.A.1.2.8) family. In terms of assembly, the complex is composed of two ATP-binding proteins (LsrA), two transmembrane proteins (LsrC and LsrD) and a solute-binding protein (LsrB).

Its subcellular location is the cell inner membrane. The catalysed reaction is ATP + H2O + (2R,4S)-2-methyl-2,3,3,4-tetrahydroxytetrahydrofuran-[AI-2-binding protein]Side 1 = ADP + phosphate + (2R,4S)-2-methyl-2,3,3,4-tetrahydroxytetrahydrofuranSide 2 + [AI-2-binding protein]Side 1.. Part of the ABC transporter complex LsrABCD involved in autoinducer 2 (AI-2) import. Responsible for energy coupling to the transport system. The polypeptide is Autoinducer 2 import ATP-binding protein LsrA (lsrA) (Enterobacter sp. (strain 638)).